The sequence spans 98 residues: MSLTYMNILVAFVISLTGLLMYRSHMMSSLLCLEGMMLSLFVMVTITILNTHLTLASMMPIILLVFAACEAALGLALLVMVSNTYGVDYVQNLNLLQC.

3 helical membrane-spanning segments follow: residues 1-21, 29-49, and 61-81; these read MSLT…GLLM, SLLC…ITIL, and IILL…LVMV.

Belongs to the complex I subunit 4L family. In terms of assembly, core subunit of respiratory chain NADH dehydrogenase (Complex I) which is composed of 45 different subunits.

It localises to the mitochondrion inner membrane. It carries out the reaction a ubiquinone + NADH + 5 H(+)(in) = a ubiquinol + NAD(+) + 4 H(+)(out). Functionally, core subunit of the mitochondrial membrane respiratory chain NADH dehydrogenase (Complex I) which catalyzes electron transfer from NADH through the respiratory chain, using ubiquinone as an electron acceptor. Part of the enzyme membrane arm which is embedded in the lipid bilayer and involved in proton translocation. The chain is NADH-ubiquinone oxidoreductase chain 4L (MT-ND4L) from Mystacina tuberculata (New Zealand lesser short-tailed bat).